A 201-amino-acid chain; its full sequence is MNTPVIGVLALQGDVREHLIALAAADAVAREVRRPEELAEVDGLVIPGGESTTISKLAHLFGMMEPLRARVRGGMPVYGTCAGMIMLADKILDPRSGQETIGGIDMIVRRNAFGRQNESFEATVDVKGVGGDPVEGVFIRAPWVESVGAEAEVLAEHGGHIVAVRQGNALATSFHPELTGDHRVHGLFVDMVRANRTPESL.

Residue glycine 49–serine 51 coordinates L-glutamine. Catalysis depends on cysteine 81, which acts as the Nucleophile. Residues arginine 110 and isoleucine 139–arginine 140 each bind L-glutamine. Residues histidine 175 and glutamate 177 each act as charge relay system in the active site.

Belongs to the glutaminase PdxT/SNO family. In the presence of PdxS, forms a dodecamer of heterodimers. Only shows activity in the heterodimer.

It carries out the reaction aldehydo-D-ribose 5-phosphate + D-glyceraldehyde 3-phosphate + L-glutamine = pyridoxal 5'-phosphate + L-glutamate + phosphate + 3 H2O + H(+). The enzyme catalyses L-glutamine + H2O = L-glutamate + NH4(+). Its pathway is cofactor biosynthesis; pyridoxal 5'-phosphate biosynthesis. Catalyzes the hydrolysis of glutamine to glutamate and ammonia as part of the biosynthesis of pyridoxal 5'-phosphate. The resulting ammonia molecule is channeled to the active site of PdxS. In Streptomyces avermitilis (strain ATCC 31267 / DSM 46492 / JCM 5070 / NBRC 14893 / NCIMB 12804 / NRRL 8165 / MA-4680), this protein is Pyridoxal 5'-phosphate synthase subunit PdxT.